Reading from the N-terminus, the 299-residue chain is Biphenyl-2,3-diol 1,2-dioxygenase (299 aa).

VOC domains lie at 6–121 and 146–267; these read ELGY…IFYG and GIGH…FGWG. Residues H149, H212, and E263 each coordinate Fe cation.

This sequence belongs to the extradiol ring-cleavage dioxygenase family. Homooctamer. The cofactor is Fe(2+).

It catalyses the reaction biphenyl-2,3-diol + O2 = 2-hydroxy-6-oxo-6-phenylhexa-2,4-dienoate + H(+). It participates in xenobiotic degradation; biphenyl degradation; 2-hydroxy-2,4-pentadienoate and benzoate from biphenyl: step 3/4. This Sphingomonas paucimobilis (Pseudomonas paucimobilis) protein is Biphenyl-2,3-diol 1,2-dioxygenase (bphC).